A 297-amino-acid chain; its full sequence is Ribosomal RNA small subunit methyltransferase A (297 aa).

6 residues coordinate S-adenosyl-L-methionine: N31, L33, G58, E79, D104, and N129.

It belongs to the class I-like SAM-binding methyltransferase superfamily. rRNA adenine N(6)-methyltransferase family. RsmA subfamily.

It localises to the cytoplasm. It carries out the reaction adenosine(1518)/adenosine(1519) in 16S rRNA + 4 S-adenosyl-L-methionine = N(6)-dimethyladenosine(1518)/N(6)-dimethyladenosine(1519) in 16S rRNA + 4 S-adenosyl-L-homocysteine + 4 H(+). Specifically dimethylates two adjacent adenosines (A1518 and A1519) in the loop of a conserved hairpin near the 3'-end of 16S rRNA in the 30S particle. May play a critical role in biogenesis of 30S subunits. This Staphylococcus aureus (strain bovine RF122 / ET3-1) protein is Ribosomal RNA small subunit methyltransferase A.